Here is a 740-residue protein sequence, read N- to C-terminus: F-BAR and double SH3 domains protein 2 (740 aa).

The F-BAR domain maps to Val-8–Asn-282. The tract at residues Pro-303–Ser-323 is disordered. Over residues Asp-307–Ser-323 the composition is skewed to basic and acidic residues. Positions Gly-356–Gln-397 form a coiled coil. 2 SH3 domains span residues Asn-469–Ser-530 and Ala-567–Ala-629. The tract at residues Ala-567–Ala-629 is required and sufficient for location at clathrin-coated pits. A disordered region spans residues Gly-633 to Val-740. The span at Ser-646–Pro-657 shows a compositional bias: pro residues. Ser-675 and Ser-681 each carry phosphoserine.

In terms of assembly, homodimer. Interacts (via SH3 domain 2) with ITSN1 (via SH3 domain 4). Recruited to clathrin-coated pits during a mid-to-late stage of assembly via interaction with ITSN1. Interacts (via SH3 domain 1) with WASL. Interacts with WAS. Interacts with CASK and MAGI1. CASK inhibits interaction with MAGI1. Phosphorylated. Phosphorylation on a Ser residue is important for recruitment to the cell membrane and for its role in promoting endocytosis. As to expression, liver, brain, heart, placenta, skeletal muscle, pancreas, lung and kidney.

It localises to the cytoplasm. The protein resides in the cell junction. The protein localises to the membrane. It is found in the clathrin-coated pit. Its subcellular location is the cell membrane. It localises to the cell projection. The protein resides in the stereocilium. Functionally, adapter protein that plays a role in endocytosis via clathrin-coated pits. Contributes to the internalization of cell surface receptors, such as integrin ITGB1 and transferrin receptor. Promotes endocytosis of EGFR in cancer cells, and thereby contributes to the down-regulation of EGFR signaling. Recruited to clathrin-coated pits during a mid-to-late stage of assembly, where it is required for normal progress from U-shaped intermediate stage pits to terminal, omega-shaped pits. Binds to membranes enriched in phosphatidylinositol 3,4-bisphosphate or phosphatidylinositol 3,4,5-trisphosphate. When bound to membranes, promotes actin polymerization via its interaction with WAS and/or WASL which leads to the activation of the Arp2/3 complex. Does not promote actin polymerisation in the absence of membranes. The sequence is that of F-BAR and double SH3 domains protein 2 (FCHSD2) from Homo sapiens (Human).